The chain runs to 1407 residues: DNA-directed RNA polymerase subunit beta' (1407 aa).

Positions 70, 72, 85, and 88 each coordinate Zn(2+). Residues aspartate 460, aspartate 462, and aspartate 464 each contribute to the Mg(2+) site. Positions 814, 888, 895, and 898 each coordinate Zn(2+).

This sequence belongs to the RNA polymerase beta' chain family. In terms of assembly, the RNAP catalytic core consists of 2 alpha, 1 beta, 1 beta' and 1 omega subunit. When a sigma factor is associated with the core the holoenzyme is formed, which can initiate transcription. It depends on Mg(2+) as a cofactor. Zn(2+) is required as a cofactor.

The catalysed reaction is RNA(n) + a ribonucleoside 5'-triphosphate = RNA(n+1) + diphosphate. Its function is as follows. DNA-dependent RNA polymerase catalyzes the transcription of DNA into RNA using the four ribonucleoside triphosphates as substrates. The protein is DNA-directed RNA polymerase subunit beta' of Cronobacter sakazakii (strain ATCC BAA-894) (Enterobacter sakazakii).